The chain runs to 373 residues: UDP-N-acetylenolpyruvoylglucosamine reductase (373 aa).

An FAD-binding PCMH-type domain is found at 30-203 (LACMADSVVT…SRVGFRLHTD (174 aa)). Arg-180 is an active-site residue. The active-site Proton donor is the Ser-258. Glu-356 is an active-site residue.

Belongs to the MurB family. The cofactor is FAD.

The protein localises to the cytoplasm. It catalyses the reaction UDP-N-acetyl-alpha-D-muramate + NADP(+) = UDP-N-acetyl-3-O-(1-carboxyvinyl)-alpha-D-glucosamine + NADPH + H(+). Its pathway is cell wall biogenesis; peptidoglycan biosynthesis. In terms of biological role, cell wall formation. The sequence is that of UDP-N-acetylenolpyruvoylglucosamine reductase from Psychrobacter cryohalolentis (strain ATCC BAA-1226 / DSM 17306 / VKM B-2378 / K5).